A 666-amino-acid polypeptide reads, in one-letter code: Probable potassium transport system protein Kup (666 aa).

The next 12 helical transmembrane spans lie at 16-36, 58-78, 100-120, 141-161, 165-185, 221-241, 253-273, 292-312, 343-363, 373-393, 399-419, and 424-444; these read GFII…LYTM, ISLI…LIAL, PWLI…GALT, IYQN…VLFG, FGTG…FSFL, IFIL…YSDL, WPFV…WILA, LTVY…QALI, LYIP…VLYF, YGLA…YYLI, PFLA…FFWA, and FMHG…VMFI.

The protein belongs to the HAK/KUP transporter (TC 2.A.72) family.

The protein resides in the cell membrane. It carries out the reaction K(+)(in) + H(+)(in) = K(+)(out) + H(+)(out). Functionally, transport of potassium into the cell. Likely operates as a K(+):H(+) symporter. The protein is Probable potassium transport system protein Kup of Streptococcus pyogenes serotype M18 (strain MGAS8232).